The primary structure comprises 420 residues: Tyrosine--tRNA ligase (420 aa).

Position 33 (Tyr-33) interacts with L-tyrosine. A 'HIGH' region motif is present at residues 38–47 (PTADSLHVGH). Tyr-167 and Gln-171 together coordinate L-tyrosine. A 'KMSKS' region motif is present at residues 227-231 (KFGKT). An ATP-binding site is contributed by Lys-230. In terms of domain architecture, S4 RNA-binding spans 353–419 (LTVADLLVKV…GKRNYALVKV (67 aa)).

It belongs to the class-I aminoacyl-tRNA synthetase family. TyrS type 1 subfamily. In terms of assembly, homodimer.

It localises to the cytoplasm. It catalyses the reaction tRNA(Tyr) + L-tyrosine + ATP = L-tyrosyl-tRNA(Tyr) + AMP + diphosphate + H(+). Its function is as follows. Catalyzes the attachment of tyrosine to tRNA(Tyr) in a two-step reaction: tyrosine is first activated by ATP to form Tyr-AMP and then transferred to the acceptor end of tRNA(Tyr). The chain is Tyrosine--tRNA ligase from Anaeromyxobacter dehalogenans (strain 2CP-C).